The primary structure comprises 76 residues: Small ribosomal subunit protein bS21C (76 aa).

Residues 52-76 are disordered; it reads GRQRKLARKQMQREGLLPTKPRKDK.

Belongs to the bacterial ribosomal protein bS21 family.

The polypeptide is Small ribosomal subunit protein bS21C (rpsU3) (Agrobacterium fabrum (strain C58 / ATCC 33970) (Agrobacterium tumefaciens (strain C58))).